The chain runs to 229 residues: Cytidylate kinase (229 aa).

Residue 12–20 participates in ATP binding; the sequence is GPSGVGKST.

This sequence belongs to the cytidylate kinase family. Type 1 subfamily.

The protein resides in the cytoplasm. It carries out the reaction CMP + ATP = CDP + ADP. The catalysed reaction is dCMP + ATP = dCDP + ADP. This is Cytidylate kinase from Mesomycoplasma hyopneumoniae (strain 7448) (Mycoplasma hyopneumoniae).